We begin with the raw amino-acid sequence, 224 residues long: UPF0758 protein Csal_2972 (224 aa).

Residues 102 to 224 form the MPN domain; sequence ALTSPTLVRR…VVSFAERGWL (123 aa). The Zn(2+) site is built by histidine 173, histidine 175, and aspartate 186. The JAMM motif motif lies at 173 to 186; it reads HNHPSGVAEPSDAD.

This sequence belongs to the UPF0758 family.

This Chromohalobacter salexigens (strain ATCC BAA-138 / DSM 3043 / CIP 106854 / NCIMB 13768 / 1H11) protein is UPF0758 protein Csal_2972.